Here is a 202-residue protein sequence, read N- to C-terminus: Recoverin (202 aa).

Residue Gly-2 is the site of N-myristoyl glycine attachment. Cys-39 is modified (cysteine sulfenic acid (-SOH)). EF-hand domains lie at 41–59 (SGRI…FFPD), 61–96 (DPKA…TTAG), 97–132 (KPTQ…IFKM), and 147–182 (TPEK…NKEI). Residues Asp-74, Asn-76, Asp-78, Thr-80, Glu-85, Asp-110, Asp-112, Asn-114, Thr-116, and Glu-121 each contribute to the Ca(2+) site. The segment at 189-192 (EPQK) is interaction with GRK1.

Belongs to the recoverin family. Homodimer; disulfide-linked. Homodimerization is caused by prolonged intense illumination. May form a complex composed of RHO, GRK1 and RCVRN in a Ca(2+)-dependent manner; RCVRN prevents the interaction between GRK1 and RHO. Interacts (via C-terminus) with GRK1 (via N-terminus); the interaction is Ca(2+)-dependent. In terms of processing, the N-terminal glycine is linked to one of four different types of acyl groups. The most abundant is myristoleate (14:1), but 14:0, 14:2, and 12:0 acyl residues are also present. The Ca(2+) induced exposure of the myristoyl group, known as the calcium-myristoyl switch, promotes RCVRN binding to the photoreceptor cell membranes only when intracellular Ca(2+) concentration is high. Oxidation on Cys-39 occurs in response to prolonged intense illumination and results in the formation of disulfide homodimers, and to a lesser extent disulfide-linked heterodimers. Expressed in rod photoreceptors in the retina (at protein level).

Its subcellular location is the photoreceptor inner segment. It is found in the cell projection. It localises to the cilium. The protein resides in the photoreceptor outer segment. The protein localises to the photoreceptor outer segment membrane. Its subcellular location is the perikaryon. Functionally, acts as a calcium sensor and regulates phototransduction of cone and rod photoreceptor cells. Modulates light sensitivity of cone photoreceptor in dark and dim conditions. In response to high Ca(2+) levels induced by low light levels, prolongs RHO/rhodopsin activation in rod photoreceptor cells by binding to and inhibiting GRK1-mediated phosphorylation of RHO/rhodopsin. Plays a role in scotopic vision/enhances vision in dim light by enhancing signal transfer between rod photoreceptors and rod bipolar cells. Improves rod photoreceptor sensitivity in dim light and mediates response of rod photoreceptors to facilitate detection of change and motion in bright light. The polypeptide is Recoverin (Rcvrn) (Mus musculus (Mouse)).